Here is a 20-residue protein sequence, read N- to C-terminus: Mu-conotoxin SIIIB (20 aa).

At Gln-1 the chain carries Pyrrolidone carboxylic acid. Disulfide bonds link Cys-3/Cys-13, Cys-4/Cys-19, and Cys-8/Cys-20. Residue Cys-20 is modified to Cysteine amide.

Expressed by the venom duct.

It localises to the secreted. Its function is as follows. Mu-conotoxins block voltage-gated sodium channels (VGSC). Potently displaces (125)I-TIIIA from native rat brain Nav1.2/SCN2A (IC(50) is 5 nM) and muscle Nav1.4/SCN4A (IC(50) is 3 nM) VGSCs. Potently and irreversibly inhibits current through Xenopus oocyte-expressed Nav1.2/SCN2A and Nav1.4/SCN4A. The sequence is that of Mu-conotoxin SIIIB from Conus striatus (Striated cone).